Here is a 458-residue protein sequence, read N- to C-terminus: ATP synthase subunit beta (458 aa).

Position 148 to 155 (148 to 155) interacts with ATP; it reads GGAGVGKT.

Belongs to the ATPase alpha/beta chains family. In terms of assembly, F-type ATPases have 2 components, CF(1) - the catalytic core - and CF(0) - the membrane proton channel. CF(1) has five subunits: alpha(3), beta(3), gamma(1), delta(1), epsilon(1). CF(0) has three main subunits: a(1), b(2) and c(9-12). The alpha and beta chains form an alternating ring which encloses part of the gamma chain. CF(1) is attached to CF(0) by a central stalk formed by the gamma and epsilon chains, while a peripheral stalk is formed by the delta and b chains.

The protein resides in the cell inner membrane. The catalysed reaction is ATP + H2O + 4 H(+)(in) = ADP + phosphate + 5 H(+)(out). Functionally, produces ATP from ADP in the presence of a proton gradient across the membrane. The catalytic sites are hosted primarily by the beta subunits. This is ATP synthase subunit beta from Legionella pneumophila (strain Paris).